We begin with the raw amino-acid sequence, 305 residues long: UDP-3-O-acyl-N-acetylglucosamine deacetylase (305 aa).

Zn(2+) is bound by residues His79, His238, and Asp242. His265 serves as the catalytic Proton donor.

The protein belongs to the LpxC family. Zn(2+) is required as a cofactor.

The enzyme catalyses a UDP-3-O-[(3R)-3-hydroxyacyl]-N-acetyl-alpha-D-glucosamine + H2O = a UDP-3-O-[(3R)-3-hydroxyacyl]-alpha-D-glucosamine + acetate. The protein operates within glycolipid biosynthesis; lipid IV(A) biosynthesis; lipid IV(A) from (3R)-3-hydroxytetradecanoyl-[acyl-carrier-protein] and UDP-N-acetyl-alpha-D-glucosamine: step 2/6. Functionally, catalyzes the hydrolysis of UDP-3-O-myristoyl-N-acetylglucosamine to form UDP-3-O-myristoylglucosamine and acetate, the committed step in lipid A biosynthesis. The protein is UDP-3-O-acyl-N-acetylglucosamine deacetylase of Haemophilus influenzae (strain 86-028NP).